Consider the following 209-residue polypeptide: Histidine biosynthesis bifunctional protein HisIE (209 aa).

A phosphoribosyl-AMP cyclohydrolase region spans residues 1-123 (MEIEKLLEQV…VLPIDYSLSI (123 aa)). A phosphoribosyl-ATP pyrophosphohydrolase region spans residues 124 to 209 (LKELEEIIKR…VMNELRRRRK (86 aa)).

In the N-terminal section; belongs to the PRA-CH family. The protein in the C-terminal section; belongs to the PRA-PH family.

It is found in the cytoplasm. The catalysed reaction is 1-(5-phospho-beta-D-ribosyl)-ATP + H2O = 1-(5-phospho-beta-D-ribosyl)-5'-AMP + diphosphate + H(+). It carries out the reaction 1-(5-phospho-beta-D-ribosyl)-5'-AMP + H2O = 1-(5-phospho-beta-D-ribosyl)-5-[(5-phospho-beta-D-ribosylamino)methylideneamino]imidazole-4-carboxamide. It functions in the pathway amino-acid biosynthesis; L-histidine biosynthesis; L-histidine from 5-phospho-alpha-D-ribose 1-diphosphate: step 2/9. It participates in amino-acid biosynthesis; L-histidine biosynthesis; L-histidine from 5-phospho-alpha-D-ribose 1-diphosphate: step 3/9. The protein is Histidine biosynthesis bifunctional protein HisIE (hisI) of Pyrococcus furiosus (strain ATCC 43587 / DSM 3638 / JCM 8422 / Vc1).